Consider the following 229-residue polypeptide: Casparian strip membrane protein 1 (229 aa).

The Cytoplasmic portion of the chain corresponds to Met-1–Cys-67. A helical membrane pass occupies residues Val-68–Ile-88. At Ala-89 to Ala-115 the chain is on the extracellular side. A helical membrane pass occupies residues Leu-116–Phe-136. Topologically, residues Ser-137–Asp-157 are cytoplasmic. A helical membrane pass occupies residues Met-158 to Ala-178. Over His-179–Val-205 the chain is Extracellular. A helical transmembrane segment spans residues Val-206–Ile-226. Over Arg-227–Arg-229 the chain is Cytoplasmic.

This sequence belongs to the Casparian strip membrane proteins (CASP) family. In terms of assembly, homodimer and heterodimers.

The protein resides in the cell membrane. In terms of biological role, regulates membrane-cell wall junctions and localized cell wall deposition. Required for establishment of the Casparian strip membrane domain (CSD) and the subsequent formation of Casparian strips, a cell wall modification of the root endodermis that determines an apoplastic barrier between the intraorganismal apoplasm and the extraorganismal apoplasm and prevents lateral diffusion. The sequence is that of Casparian strip membrane protein 1 from Sorghum bicolor (Sorghum).